Consider the following 184-residue polypeptide: Oligoribonuclease (184 aa).

The Exonuclease domain maps to 8-171; the sequence is LIWIDLEMTG…EDIRESVVEL (164 aa). Tyr129 is a catalytic residue.

This sequence belongs to the oligoribonuclease family.

Its subcellular location is the cytoplasm. 3'-to-5' exoribonuclease specific for small oligoribonucleotides. This Buchnera aphidicola subsp. Acyrthosiphon pisum (strain APS) (Acyrthosiphon pisum symbiotic bacterium) protein is Oligoribonuclease.